Here is a 392-residue protein sequence, read N- to C-terminus: Trans-2-enoyl-CoA reductase [NADH] (392 aa).

Residues 74–75, 111–112, and 141–142 each bind NAD(+); these read FE, DA, and LA. Substrate is bound at residue tyrosine 227. The Proton donor role is filled by tyrosine 237. NAD(+) is bound by residues lysine 246 and 276 to 278; that span reads VVT.

Belongs to the TER reductase family. Monomer.

The enzyme catalyses a 2,3-saturated acyl-CoA + NAD(+) = a (2E)-enoyl-CoA + NADH + H(+). It functions in the pathway lipid metabolism; fatty acid biosynthesis. Involved in the fatty acid synthesis (FAS II). Catalyzes the reduction of a carbon-carbon double bond in an enoyl moiety that is covalently linked to a coenzyme A (CoA). This is Trans-2-enoyl-CoA reductase [NADH] from Brachyspira hyodysenteriae (strain ATCC 49526 / WA1).